We begin with the raw amino-acid sequence, 344 residues long: Flavonoid 7-O-methyltransferase 1A (344 aa).

An S-adenosyl-L-methionine-binding site is contributed by aspartate 211. The active-site Proton acceptor is histidine 249.

It belongs to the class I-like SAM-binding methyltransferase superfamily. Cation-independent O-methyltransferase family. In terms of assembly, homodimer.

It carries out the reaction apigenin + S-adenosyl-L-methionine = genkwanin + S-adenosyl-L-homocysteine + H(+). The enzyme catalyses luteolin + S-adenosyl-L-methionine = luteolin 7-methyl ether + S-adenosyl-L-homocysteine + H(+). It catalyses the reaction quercetin + S-adenosyl-L-methionine = rhamnetin + S-adenosyl-L-homocysteine + H(+). The catalysed reaction is (2S)-naringenin + S-adenosyl-L-methionine = (2S)-sakuranetin + S-adenosyl-L-homocysteine + H(+). It carries out the reaction kaempferol + S-adenosyl-L-methionine = kaempferol 7-methyl ether + S-adenosyl-L-homocysteine + H(+). The enzyme catalyses isorhamnetin + S-adenosyl-L-methionine = rhamnacene + S-adenosyl-L-homocysteine + H(+). It catalyses the reaction 4',7,8-trihydroxyflavone + S-adenosyl-L-methionine = 4',8-dihydroxy-7-methoxyflavone + S-adenosyl-L-homocysteine. The catalysed reaction is scutellarein + S-adenosyl-L-methionine = scutellarein 7-methyl ether + S-adenosyl-L-homocysteine. It functions in the pathway flavonoid metabolism. In terms of biological role, flavonoid 7-O-methyltransferase involved in the biosynthesis of polymethoxylated flavonoids natural products such as pebrellin, aroma compounds which contribute to the flavor of peppermint, and exhibit pharmacological activities such as anti-allergic, anti-oxidant, antibacterial, anti-proliferative, and anti-inflammatory effects. Catalyzes S-adenosylmethionine-dependent regioselective 7-O-methylation of flavonoids; active on various hydroxylated flavonoid substrates, including luteolin (LUT), quercetin, kaempferol, isorhamnetin, apigenin (API), scutellarein (6-hydroxy-apigenin, 6-OH-API, SCU), 7,8,4'-trihydroxy-flavone and naringenin (NAR), and, with a lower efficiency, 7,8,3',4'-tetrahydroxy-flavone, taxifolin, hesperetin and genistein. This is Flavonoid 7-O-methyltransferase 1A from Mentha piperita (Peppermint).